Reading from the N-terminus, the 160-residue chain is Putative pre-16S rRNA nuclease (160 aa).

This sequence belongs to the YqgF nuclease family.

It localises to the cytoplasm. Could be a nuclease involved in processing of the 5'-end of pre-16S rRNA. This chain is Putative pre-16S rRNA nuclease, found in Cutibacterium acnes (strain DSM 16379 / KPA171202) (Propionibacterium acnes).